A 319-amino-acid chain; its full sequence is Putative metal ion transporter YfjQ (319 aa).

Helical transmembrane passes span 254–274 and 290–310; these read IMMT…IAGV and GYFA…IWFV.

This sequence belongs to the CorA metal ion transporter (MIT) (TC 1.A.35) family.

It localises to the cell membrane. The protein is Putative metal ion transporter YfjQ (yfjQ) of Bacillus subtilis (strain 168).